Here is a 132-residue protein sequence, read N- to C-terminus: Small ribosomal subunit protein uS8 (132 aa).

The protein belongs to the universal ribosomal protein uS8 family. Part of the 30S ribosomal subunit. Contacts proteins S5 and S12.

Its function is as follows. One of the primary rRNA binding proteins, it binds directly to 16S rRNA central domain where it helps coordinate assembly of the platform of the 30S subunit. The chain is Small ribosomal subunit protein uS8 from Staphylococcus carnosus (strain TM300).